The following is a 146-amino-acid chain: NADH-quinone oxidoreductase subunit A (146 aa).

The next 3 membrane-spanning stretches (helical) occupy residues 14 to 34 (FAVF…GAFF), 66 to 86 (FYLV…LYAW), and 96 to 116 (VGFI…VYLV).

The protein belongs to the complex I subunit 3 family. NDH-1 is composed of 13 different subunits. Subunits NuoA, H, J, K, L, M, N constitute the membrane sector of the complex.

Its subcellular location is the cell inner membrane. The catalysed reaction is a quinone + NADH + 5 H(+)(in) = a quinol + NAD(+) + 4 H(+)(out). Functionally, NDH-1 shuttles electrons from NADH, via FMN and iron-sulfur (Fe-S) centers, to quinones in the respiratory chain. The immediate electron acceptor for the enzyme in this species is believed to be ubiquinone. Couples the redox reaction to proton translocation (for every two electrons transferred, four hydrogen ions are translocated across the cytoplasmic membrane), and thus conserves the redox energy in a proton gradient. The chain is NADH-quinone oxidoreductase subunit A from Serratia proteamaculans (strain 568).